The chain runs to 243 residues: Small ribosomal subunit protein uS3 (243 aa).

A KH type-2 domain is found at 39–110; it reads IRTFIEKKYG…QVRINVVEVE (72 aa). The tract at residues 216-243 is disordered; it reads QTIPVGANPKRKASRRPQQFEDRSNENS. The segment covering 233–243 has biased composition (basic and acidic residues); it reads QQFEDRSNENS.

This sequence belongs to the universal ribosomal protein uS3 family. In terms of assembly, part of the 30S ribosomal subunit. Forms a tight complex with proteins S10 and S14.

In terms of biological role, binds the lower part of the 30S subunit head. Binds mRNA in the 70S ribosome, positioning it for translation. The polypeptide is Small ribosomal subunit protein uS3 (Prochlorococcus marinus (strain MIT 9215)).